The following is a 98-amino-acid chain: NADH-ubiquinone oxidoreductase chain 4L (98 aa).

A run of 3 helical transmembrane segments spans residues 1-21, 28-48, and 59-79; these read MTPLNINLTMAFFLALAGVLI, STLLCLEGMMLSLFILLSLLI, and APLILLVFSACEAGVGLALLV.

The protein belongs to the complex I subunit 4L family. In terms of assembly, core subunit of respiratory chain NADH dehydrogenase (Complex I) which is composed of 45 different subunits.

The protein localises to the mitochondrion inner membrane. It carries out the reaction a ubiquinone + NADH + 5 H(+)(in) = a ubiquinol + NAD(+) + 4 H(+)(out). In terms of biological role, core subunit of the mitochondrial membrane respiratory chain NADH dehydrogenase (Complex I) which catalyzes electron transfer from NADH through the respiratory chain, using ubiquinone as an electron acceptor. Part of the enzyme membrane arm which is embedded in the lipid bilayer and involved in proton translocation. This Tarsipes rostratus (Honey possum) protein is NADH-ubiquinone oxidoreductase chain 4L (MT-ND4L).